The primary structure comprises 366 residues: 3-dehydroquinate synthase (366 aa).

Residues 69–74 (DGEAYK), 103–107 (GVIGD), 127–128 (TT), Lys-140, and Lys-149 each bind NAD(+). Residues Glu-182, His-245, and His-262 each coordinate Zn(2+).

It belongs to the sugar phosphate cyclases superfamily. Dehydroquinate synthase family. Requires Co(2+) as cofactor. The cofactor is Zn(2+). It depends on NAD(+) as a cofactor.

It localises to the cytoplasm. The enzyme catalyses 7-phospho-2-dehydro-3-deoxy-D-arabino-heptonate = 3-dehydroquinate + phosphate. It functions in the pathway metabolic intermediate biosynthesis; chorismate biosynthesis; chorismate from D-erythrose 4-phosphate and phosphoenolpyruvate: step 2/7. Functionally, catalyzes the conversion of 3-deoxy-D-arabino-heptulosonate 7-phosphate (DAHP) to dehydroquinate (DHQ). The chain is 3-dehydroquinate synthase from Pseudomonas fluorescens (strain ATCC BAA-477 / NRRL B-23932 / Pf-5).